Here is a 793-residue protein sequence, read N- to C-terminus: Netrin-B (793 aa).

A signal peptide spans 1–22 (MVRATGTRMGLLLPIILALAIG). The region spanning 39 to 303 (KPRKCLPSFV…NLQDNDSADA (265 aa)) is the Laminin N-terminal domain. Residues Asn103, Asn125, and Asn298 are each glycosylated (N-linked (GlcNAc...) asparagine). The segment at 332 to 378 (SVVKRQGKHKGSAYEKHYQSKLAATTPPQQPPKVTPPGKVTPPSTAA) is disordered. Residues 367–378 (PPGKVTPPSTAA) are compositionally biased toward low complexity. 15 disulfide bridges follow: Cys405–Cys414, Cys407–Cys461, Cys463–Cys472, Cys475–Cys495, Cys498–Cys507, Cys500–Cys525, Cys528–Cys537, Cys540–Cys558, Cys561–Cys573, Cys563–Cys580, Cys582–Cys591, Cys594–Cys608, Cys649–Cys738, Cys652–Cys740, and Cys665–Cys792. Laminin EGF-like domains are found at residues 405-497 (CKCN…ECKM), 498-560 (CQCN…VCKR), and 561-610 (CDCH…PCIK). The segment at 420–446 (SGSGTALSDQDDGQDEDTPSAPSLANH) is disordered. The segment covering 428–437 (DQDDGQDEDT) has biased composition (acidic residues). The region spanning 649-792 (CGKCKASPKK…KRFQRRARKC (144 aa)) is the NTR domain. Asn746 carries an N-linked (GlcNAc...) asparagine glycan.

As to quaternary structure, binds to unc-5 and fra receptors. As to expression, at 24 hr after puparium formation (APF), detected in the most anterior (oldest) L3, L4 and L5 lamina neurons (at protein level). At 48 hr APF, expressed in all L3, L4 and L5 neurons with slightly higher expression in the L3 neurons (at protein level). At the midline of developing CNS and in different subsets of neurons, muscles, and epidermal patches.

The protein localises to the secreted. The protein resides in the extracellular space. It is found in the extracellular matrix. It localises to the cytoplasm. Its subcellular location is the perinuclear region. Netrins control guidance of CNS commissural axons and peripheral motor axons. Its association with either fra or unc-5 receptors will lead to axon attraction or repulsion, respectively. While short-range repulsion requires both fra and unc-5 receptors, long-range repulsion only requires unc-5. The polypeptide is Netrin-B (NetB) (Drosophila melanogaster (Fruit fly)).